A 2067-amino-acid polypeptide reads, in one-letter code: MSEVRKFTKRLSKPGTAAELRQSVSEAVRTSIAVEQPKIIEPLDYENVVFQRKAQIHSDPQRDLLLWPADDVSEAHIDRHRRTINPSVPQNAENEAKSLFAKECIKMYNTNWHVINYNYEAYSGDFRMLPCKGMKTEKLPSQVFEVDEGEEDSSSLCSQRGGVMKQGWLQKANINSSLSVSMKVFKRRYFYLSQLPDGSYILNSYKDEKNYKESKGSIYLDSCIDVVPCPKMRRNGFELKMQERYSHYLAADSEAEMEDWVNTIKQALLSTMEDRRNGSETSEGSLDDDSSSQGKPESITESFGRSLHPELMKYARETDQLSKMSRNEGRQKIFSLDPEVQRLDFSGIEPDVKPFEERFGRRIMVSCHNLTFNLQGCVSEKNDGVLTNVEPFFISLALFDLSKGCKISADFHVDLNPPCVREMIQTGSAGTPTEAGEDENDPVKMNGHGLPLLQRVAESLLHFPTQGIFSVTNPHADIFLLARVEKVLQNGITHCADPYIKPSDISKTVQKVLKTAKQTCQRLGQYRMPFAWAAKQVFKDSQGTLDTDGKFSPLYRQDSSKISTEDLIKLLTDLKKPEKNKLQIIPGQINITVECVPPDLSNSVTSSYIPVKPFADQCDSVSVEVEEFVPEEARFNHPFTIYNNHLYIYPQQLKYDSQKAFDKARNIAVCVQFKDSDEEGSSPLKCIYGKPGDPLFTTSAFAAVLHHNQSPEFYDEIKIELPVHIHEKHHILFTFYHISCDLGTKTTSKKREGVETLVGYSWTPLLKDGRIKSSDLQLPVSANLLAGYLCDKSQDIKKVFPYIKWVDNAKPLFKVRAYVASTIYTQDLHLHNFFQHCQLMRSTSQGNPAELIKYLKCLHAVETQVVIKFLPTVLVQLFEVLSMASKEGQDVAVNSTRVIIHIVSQCHEEGLEHYLRSFLKYVFRINNATSENSVTTHEVLATAVTVILKQTADINTCNKLLKYSWFFFETMARSMAQYLMDGNRMKMPRAQRFPESFQQALQCLLLSIMPHITIRYVEIPEEARCVNFSLACFIKRCLTFMNRGFAFSLINDYMCGFSLKDPKVLTEMKFDFLMTVCNHEHYIPLNLPMAFGRTKLQRVQDFISYAAECFGVVDQSLEYSLTEDYCKNHFLVGLLLREVADGLQACPEIRQLAVAVLKNLMIKHAMDDRYNAFKNQQARICLLYLPLFELLYQNLSQMNSPRQMCRNGLGLMYRDDLSVDSRRSSTIVDKEPSGSVTQNGLSRRGESRGSMYGDPGTPDINELHRRGSTMSTVPAAGRLGQYEIRGLLLCYLHIVRTLSDDTLTAYWSKVNPQDIMNFLSLLEICIIQFRYVGRRNISRSQEPWVSKLFSPERKSQTMPVLRGRASLMQAKLQQFSTMDTSLTLNMAGGPTEAEINHQSLLEGNTSTEVCLTVLDVLSLFTQSFKNQLLDSDGHNALMTKIFDTYLTLLKVGQSETAIKHIFASLRAFIVKFQVPLFKGRVVLCGSLCYEVLKCCMSKLSVLRGEASALLYLLMRHNFDYTKRKSFLRVHLQIIIAVSQLIADVALTGSSRFQESLSIINNFANSDKIMKTTTFPSEVKGLTMRIRTVLMATAQMREHEKDPEMLLDLQYSLARSYASTPELRRTWLDSMARAHSKNGDFSEAAMCNVHVAALMAEYLHRKKLFPSGLAAFKRTTQNIDEEGAMKEDIGMQDVYYTEDVLVEQLEVCVESLWKAERFELITHIARLIIPVYEKRHEFEKLRRLYDTLQRAYAKILEVMQSGRRLLGTYFRVAFFGQGFFEEEDGKEYIYKEPKLTTLPEISHRLLKLYGEKFGSENVKIIQDSNKVNQKDLDSKFAYIQVTYVKPFFDEKEMAERKTDFEKCHNIQRFVFETPFTLTGKKQGGVEEQCKRRTVLTTANTFPYVKKRIEVVGEKHTELKPIDVAIDEMKEKSSELAKLCSNQEVNMITLQLKLQGCVSVQVNAGPMAYARAFLDESKSGQSNKKVKDLKEIFRQFVNACSMALDINERLIKEDQYEYHEGLKANFKSMVKELSEIIHEQIFQEDMMRSLLQNSLHVFRAISGTSTDLS.

Residues 162-269 (GVMKQGWLQK…WVNTIKQALL (108 aa)) form the PH domain. The tract at residues 274 to 302 (DRRNGSETSEGSLDDDSSSQGKPESITES) is disordered. A compositionally biased stretch (polar residues) spans 291–302 (SSQGKPESITES). The region spanning 643–820 (NNHLYIYPQQ…PLFKVRAYVA (178 aa)) is the C2 DOCK-type domain. The tract at residues 1224–1267 (SSTIVDKEPSGSVTQNGLSRRGESRGSMYGDPGTPDINELHRRG) is disordered. The DOCKER domain occupies 1614-2040 (RSYASTPELR…LSEIIHEQIF (427 aa)).

It belongs to the DOCK family.

In terms of biological role, guanine nucleotide-exchange factor (GEF) that activates CDC42 by exchanging bound GDP for free GTP. The polypeptide is Dedicator of cytokinesis protein 11 (Danio rerio (Zebrafish)).